Reading from the N-terminus, the 653-residue chain is Chaperone protein HtpG (653 aa).

The interval 1-361 is a; substrate-binding; it reads MSETNQVQNH…SNDLPLNVSR (361 aa). Residues 362–578 form a b region; that stretch reads EILQDNKVTQ…DDDMSSQMAK (217 aa). The tract at residues 579-653 is c; sequence LMASVGQEVP…LNKLMLSLTK (75 aa).

It belongs to the heat shock protein 90 family. In terms of assembly, homodimer.

The protein resides in the cytoplasm. Its function is as follows. Molecular chaperone. Has ATPase activity. In Colwellia psychrerythraea (strain 34H / ATCC BAA-681) (Vibrio psychroerythus), this protein is Chaperone protein HtpG.